We begin with the raw amino-acid sequence, 306 residues long: Non-specific ribonucleoside hydrolase RihC (306 aa).

Histidine 235 is a catalytic residue.

This sequence belongs to the IUNH family. RihC subfamily.

In terms of biological role, hydrolyzes both purine and pyrimidine ribonucleosides with a broad-substrate specificity. The protein is Non-specific ribonucleoside hydrolase RihC of Salmonella dublin (strain CT_02021853).